A 120-amino-acid chain; its full sequence is NAD(P)H-quinone oxidoreductase subunit 3, chloroplastic (120 aa).

Helical transmembrane passes span 7–27, 64–84, and 89–109; these read YNYFWIFLLIASLIPTIAFSI, MFALVFVIFDVETVFLYPWAM, and LGIPAFIEVFIFVFILIIGLI.

Belongs to the complex I subunit 3 family. NDH is composed of at least 16 different subunits, 5 of which are encoded in the nucleus.

Its subcellular location is the plastid. The protein localises to the chloroplast thylakoid membrane. It catalyses the reaction a plastoquinone + NADH + (n+1) H(+)(in) = a plastoquinol + NAD(+) + n H(+)(out). The enzyme catalyses a plastoquinone + NADPH + (n+1) H(+)(in) = a plastoquinol + NADP(+) + n H(+)(out). Functionally, NDH shuttles electrons from NAD(P)H:plastoquinone, via FMN and iron-sulfur (Fe-S) centers, to quinones in the photosynthetic chain and possibly in a chloroplast respiratory chain. The immediate electron acceptor for the enzyme in this species is believed to be plastoquinone. Couples the redox reaction to proton translocation, and thus conserves the redox energy in a proton gradient. The sequence is that of NAD(P)H-quinone oxidoreductase subunit 3, chloroplastic from Anthoceros angustus (Hornwort).